The chain runs to 121 residues: Small ribosomal subunit protein uS13 (121 aa).

A disordered region spans residues 92-121 (RKGLPVRGQSSKTNARTVKGPRKTVANKKK). Over residues 110–121 (KGPRKTVANKKK) the composition is skewed to basic residues.

It belongs to the universal ribosomal protein uS13 family. As to quaternary structure, part of the 30S ribosomal subunit. Forms a loose heterodimer with protein S19. Forms two bridges to the 50S subunit in the 70S ribosome.

Functionally, located at the top of the head of the 30S subunit, it contacts several helices of the 16S rRNA. In the 70S ribosome it contacts the 23S rRNA (bridge B1a) and protein L5 of the 50S subunit (bridge B1b), connecting the 2 subunits; these bridges are implicated in subunit movement. Contacts the tRNAs in the A and P-sites. The chain is Small ribosomal subunit protein uS13 from Mycoplasma capricolum subsp. capricolum (strain California kid / ATCC 27343 / NCTC 10154).